We begin with the raw amino-acid sequence, 1377 residues long: Zinc finger MYM-type protein 2 (1377 aa).

Residues lysine 48, lysine 88, lysine 98, and lysine 104 each participate in a glycyl lysine isopeptide (Lys-Gly) (interchain with G-Cter in SUMO2) cross-link. 2 stretches are compositionally biased toward polar residues: residues threonine 85–glutamate 115 and threonine 127–phenylalanine 138. A disordered region spans residues threonine 85 to glutamate 177. The span at isoleucine 139–aspartate 152 shows a compositional bias: basic and acidic residues. Lysine 147 participates in a covalent cross-link: Glycyl lysine isopeptide (Lys-Gly) (interchain with G-Cter in SUMO2). The span at valine 153–lysine 164 shows a compositional bias: polar residues. Serine 159 is modified (phosphoserine). Residues lysine 253 and lysine 297 each participate in a glycyl lysine isopeptide (Lys-Gly) (interchain with G-Cter in SUMO2) cross-link. The tract at residues asparagine 273–serine 305 is disordered. Polar residues predominate over residues serine 284 to glutamine 298. Serine 305 carries the phosphoserine modification. Glycyl lysine isopeptide (Lys-Gly) (interchain with G-Cter in SUMO2) cross-links involve residues lysine 312, lysine 325, lysine 348, and lysine 366. The segment at valine 327–phenylalanine 363 adopts an MYM-type 1 zinc-finger fold. An MYM-type 2 zinc finger spans residues proline 369–tyrosine 409. Residues lysine 417, lysine 441, lysine 491, lysine 503, lysine 513, lysine 529, and lysine 532 each participate in a glycyl lysine isopeptide (Lys-Gly) (interchain with G-Cter in SUMO2) cross-link. MYM-type zinc fingers lie at residues asparagine 421–tyrosine 456 and isoleucine 463–tyrosine 502. An MYM-type 5 zinc finger spans residues leucine 533–histidine 570. Residues lysine 576, lysine 603, lysine 649, lysine 658, lysine 688, lysine 700, and lysine 709 each participate in a glycyl lysine isopeptide (Lys-Gly) (interchain with G-Cter in SUMO2) cross-link. The segment at glutamine 636–tyrosine 671 adopts an MYM-type 6 zinc-finger fold. MYM-type zinc fingers lie at residues arginine 723–phenylalanine 758 and lysine 764–phenylalanine 799. Glycyl lysine isopeptide (Lys-Gly) (interchain with G-Cter in SUMO2) cross-links involve residues lysine 764, lysine 788, lysine 812, and lysine 829. A phosphoserine mark is found at serine 838 and serine 958. Disordered regions lie at residues leucine 983–proline 1002 and valine 1028–serine 1064. The segment covering proline 1039–alanine 1050 has biased composition (basic residues). Serine 1064 bears the Phosphoserine mark. A Phosphothreonine modification is found at threonine 1376.

Can form homodimers. May be a component of a BHC histone deacetylase complex that contains HDAC1, HDAC2, HMG20B/BRAF35, KDM1A, RCOR1/CoREST, PHF21A/BHC80, ZMYM2, ZNF217, ZMYM3, GSE1 and GTF2I. Interacts with FOXP1 and FOXP2.

It is found in the nucleus. Involved in the negative regulation of transcription. This Homo sapiens (Human) protein is Zinc finger MYM-type protein 2 (ZMYM2).